The chain runs to 218 residues: Cytochrome P450 3A19 (218 aa).

Position 153 (Cys-153) interacts with heme.

Belongs to the cytochrome P450 family. Heme is required as a cofactor.

It is found in the endoplasmic reticulum membrane. The protein resides in the microsome membrane. It catalyses the reaction an organic molecule + reduced [NADPH--hemoprotein reductase] + O2 = an alcohol + oxidized [NADPH--hemoprotein reductase] + H2O + H(+). Functionally, cytochromes P450 are a group of heme-thiolate monooxygenases. In liver microsomes, this enzyme is involved in an NADPH-dependent electron transport pathway. It oxidizes a variety of structurally unrelated compounds, including steroids, fatty acids, and xenobiotics. This Capra hircus aegagrus (Wild goat) protein is Cytochrome P450 3A19 (CYP3A19).